We begin with the raw amino-acid sequence, 888 residues long: Translation initiation factor IF-2 (888 aa).

2 disordered regions span residues 96–122 and 158–302; these read TTKQ…EAPE and ELKE…SAPT. Composition is skewed to basic and acidic residues over residues 98–114 and 158–167; these read KQDE…EDVS and ELKEKQEKRR. Residues 181–206 show a composition bias toward polar residues; the sequence is TQVQEPGSETAAVSGSVAATQPESTE. Residues 207 to 225 show a composition bias toward low complexity; that stretch reads TAAVTPSATITVTTQTTPA. Basic and acidic residues-rich tracts occupy residues 226–243 and 253–269; these read AKER…EKGE and EAWK…KARG. A tr-type G domain is found at 390–559; the sequence is SRAPVVTVMG…LLQAEVLELK (170 aa). The segment at 399 to 406 is G1; it reads GHVDHGKT. Residue 399-406 coordinates GTP; the sequence is GHVDHGKT. Residues 424 to 428 form a G2 region; the sequence is GITQH. A G3 region spans residues 445–448; the sequence is DTPG. GTP is bound by residues 445 to 449 and 499 to 502; these read DTPGH and NKMD. Residues 499–502 form a G4 region; that stretch reads NKMD. Residues 535–537 form a G5 region; the sequence is SAK.

It belongs to the TRAFAC class translation factor GTPase superfamily. Classic translation factor GTPase family. IF-2 subfamily.

It is found in the cytoplasm. Its function is as follows. One of the essential components for the initiation of protein synthesis. Protects formylmethionyl-tRNA from spontaneous hydrolysis and promotes its binding to the 30S ribosomal subunits. Also involved in the hydrolysis of GTP during the formation of the 70S ribosomal complex. The sequence is that of Translation initiation factor IF-2 from Nitrosomonas eutropha (strain DSM 101675 / C91 / Nm57).